The following is a 362-amino-acid chain: Cobalt-precorrin-5B C(1)-methyltransferase (362 aa).

It belongs to the CbiD family.

It catalyses the reaction Co-precorrin-5B + S-adenosyl-L-methionine = Co-precorrin-6A + S-adenosyl-L-homocysteine. Its pathway is cofactor biosynthesis; adenosylcobalamin biosynthesis; cob(II)yrinate a,c-diamide from sirohydrochlorin (anaerobic route): step 6/10. Catalyzes the methylation of C-1 in cobalt-precorrin-5B to form cobalt-precorrin-6A. This Burkholderia orbicola (strain MC0-3) protein is Cobalt-precorrin-5B C(1)-methyltransferase.